The chain runs to 999 residues: MEAAHLLPAADVLRHFSVTAEGGLSPAQVTGARERYGPNELPSEEGKSLWELVLEQFEDLLVRILLLAALVSFVLAWFEEGEETTTAFVEPLVIMLILVANAIVGVWQERNAESAIEALKEYEPEMGKVIRSDRKGVQRIRARDIVPGDIVEVAVGDKVPADLRLIEIKSTTLRVDQSILTGESVSVTKHTEAIPDPRAVNQDKKNMLFSGTNITSGKAVGVAVATGLHTELGKIRSQMAAVEPERTPLQRKLDEFGRQLSHAISVICVAVWVINIGHFADPAHGGSWLRGAVYYFKIAVALAVAAIPEGLPAVITTCLALGTRRMARKNAIVRSLPSVETLGCTSVICSDKTGTLTTNQMSVCRMFVVAEADAGSCLLHEFTISGTTYTPEGEVRQGDQPVRCGQFDGLVELATICALCNDSALDYNEAKGVYEKVGEATETALTCLVEKMNVFDTDLQALSRVERAGACNTVIKQLMRKEFTLEFSRDRKSMSVYCTPTRPHPTGQGSKMFVKGAPESVIERCSSVRVGSRTAPLTPTSREQILAKIRDWGSGSDTLRCLALATRDAPPRKEDMELDDCSKFVQYETDLTFVGCVGMLDPPRPEVAACITRCYQAGIRVVMITGDNKGTAVAICRRLGIFGDTEDVAGKAYTGREFDDLSPEQQRQACRTARCFARVEPAHKSRIVENLQSFNEITAMTGDGVNDAPALKKAEIGIAMGSGTAVAKSAAEMVLSDDNFASIVAAVEEGRAIYSNMKQFIRYLISSNVGEVVCIFLTAILGLPEALIPVQLLWVNLVTDGLPATALGFNPPDLDIMEKLPRSPREALISGWLFFRYLAIGVYVGLATVAAATWWFVYDAEGPHINFYQLRNFLKCSEDNPLFAGIDCEVFESRFPTTMALSVLVTIEMCNALNSVSENQSLLRMPPWMNPWLLVAVAMSMALHFLILLVPPLPLIFQVTPLSGRQWVVVLQISLPVILLDEALKYLSRNHMHEEMSQK.

At M1 the chain carries N-acetylmethionine. The Cytoplasmic segment spans residues 1 to 48 (MEAAHLLPAADVLRHFSVTAEGGLSPAQVTGARERYGPNELPSEEGKS). At S17 the chain carries Phosphoserine. T19 carries the post-translational modification Phosphothreonine. At S25 the chain carries Phosphoserine. The chain crosses the membrane as a helical span at residues 49-69 (LWELVLEQFEDLLVRILLLAA). Over 70–89 (LVSFVLAWFEEGEETTTAFV) the chain is Lumenal. Residues 90–110 (EPLVIMLILVANAIVGVWQER) traverse the membrane as a helical segment. The Cytoplasmic segment spans residues 111–253 (NAESAIEALK…PERTPLQRKL (143 aa)). A helical membrane pass occupies residues 254–273 (DEFGRQLSHAISVICVAVWV). The Lumenal segment spans residues 274–295 (INIGHFADPAHGGSWLRGAVYY). A helical transmembrane segment spans residues 296-313 (FKIAVALAVAAIPEGLPA). Ca(2+)-binding residues include V304, A305, I307, and E309. Residues 314-757 (VITTCLALGT…EEGRAIYSNM (444 aa)) lie on the Cytoplasmic side of the membrane. Residue D351 is the 4-aspartylphosphate intermediate of the active site. Positions 351 and 353 each coordinate Mg(2+). T353 provides a ligand contact to ATP. Residues 370–400 (AEADAGSCLLHEFTISGTTYTPEGEVRQGDQ) form an interaction with phospholamban 1 region. Position 415 is a phosphothreonine (T415). Positions 442, 489, 515, 560, 625, 626, and 627 each coordinate ATP. S662 bears the Phosphoserine mark. Residues R678 and K684 each coordinate ATP. Position 703 (D703) interacts with Mg(2+). N706 contributes to the ATP binding site. Residues 758-777 (KQFIRYLISSNVGEVVCIFL) form a helical membrane-spanning segment. Ca(2+) is bound by residues N768 and E771. The Lumenal portion of the chain corresponds to 778-787 (TAILGLPEAL). The chain crosses the membrane as a helical span at residues 788-808 (IPVQLLWVNLVTDGLPATALG). The tract at residues 788–808 (IPVQLLWVNLVTDGLPATALG) is interaction with phospholamban 2. Residues N796, T799, and D800 each contribute to the Ca(2+) site. At 809–828 (FNPPDLDIMEKLPRSPREAL) the chain is on the cytoplasmic side. Residues 829–851 (ISGWLFFRYLAIGVYVGLATVAA) traverse the membrane as a helical segment. Residues 852–897 (ATWWFVYDAEGPHINFYQLRNFLKCSEDNPLFAGIDCEVFESRFPT) lie on the Lumenal side of the membrane. Residues 898 to 917 (TMALSVLVTIEMCNALNSVS) form a helical membrane-spanning segment. E908 contributes to the Ca(2+) binding site. Residues 918–930 (ENQSLLRMPPWMN) are Cytoplasmic-facing. A helical membrane pass occupies residues 931–949 (PWLLVAVAMSMALHFLILL). Over 950–964 (VPPLPLIFQVTPLSG) the chain is Lumenal. Residues 965–985 (RQWVVVLQISLPVILLDEALK) form a helical membrane-spanning segment. Topologically, residues 986–999 (YLSRNHMHEEMSQK) are cytoplasmic.

The protein belongs to the cation transport ATPase (P-type) (TC 3.A.3) family. Type IIA subfamily. Interacts with sarcolipin (SLN). Interacts with phospholamban (PLN). Interacts with myoregulin (MRLN). Interacts with DWORF. Interacts with VMP1. Interacts with TUNAR; the interaction occurs at low levels in low glucose conditions and is increased by high glucose levels. Requires Mg(2+) as cofactor. Found in most tissues. Most abundant in thymus, trachea, salivary gland, spleen, bone marrow, lymph node, peripheral leukocytes, pancreas and colon. Also detected in fetal tissues. Expressed in cell lineages of hematopoietic, epithelial, or embryonic origin and also expressed in several cancer cell lines.

The protein resides in the nucleus membrane. It is found in the endoplasmic reticulum membrane. Its subcellular location is the sarcoplasmic reticulum membrane. It carries out the reaction Ca(2+)(in) + ATP + H2O = Ca(2+)(out) + ADP + phosphate + H(+). Its activity is regulated as follows. Inhibited by sarcolipin (SLN), phospholamban (PLN) and myoregulin (MRLN). Enhanced by DWORF; DWORF increases activity by displacing sarcolipin (SLN), phospholamban (PLN) and myoregulin (MRLN). Functionally, this magnesium-dependent enzyme catalyzes the hydrolysis of ATP coupled with the transport of calcium. Transports calcium ions from the cytosol into the sarcoplasmic/endoplasmic reticulum lumen. Contributes to calcium sequestration involved in muscular excitation/contraction. In Homo sapiens (Human), this protein is Sarcoplasmic/endoplasmic reticulum calcium ATPase 3.